A 432-amino-acid chain; its full sequence is Chaperone SurA (432 aa).

Positions 1-26 are cleaved as a signal peptide; sequence MKKIASFCSAAVLIASSFLLNNTVQA. 2 consecutive PpiC domains span residues 176–277 and 286–386; these read QTEY…KVQD and VQEV…EVTG.

It is found in the periplasm. It catalyses the reaction [protein]-peptidylproline (omega=180) = [protein]-peptidylproline (omega=0). Functionally, chaperone involved in the correct folding and assembly of outer membrane proteins. Recognizes specific patterns of aromatic residues and the orientation of their side chains, which are found more frequently in integral outer membrane proteins. May act in both early periplasmic and late outer membrane-associated steps of protein maturation. This Idiomarina loihiensis (strain ATCC BAA-735 / DSM 15497 / L2-TR) protein is Chaperone SurA.